The chain runs to 151 residues: Large-conductance mechanosensitive channel (151 aa).

A run of 2 helical transmembrane segments spans residues 12 to 32 (GNIVDLAVAVVIGTAFTALVT) and 71 to 91 (VLLSAAINFFLIAFAVYFLVV). Positions 122–151 (AQTNGDSPGRHGGRGTPSPTDGPRASTESQ) are disordered.

Belongs to the MscL family. As to quaternary structure, homopentamer.

The protein resides in the cell membrane. Its function is as follows. Channel that opens in response to stretch forces in the membrane lipid bilayer. May participate in the regulation of osmotic pressure changes within the cell. This Mycobacterium tuberculosis (strain CDC 1551 / Oshkosh) protein is Large-conductance mechanosensitive channel.